Reading from the N-terminus, the 707-residue chain is ATP-dependent RNA helicase DHX33 (707 aa).

The tract at residues 1–64 is disordered; it reads MPEEAGFPPA…LAQPSASPYP (64 aa). The tract at residues 1 to 80 is required for nucleolar location; that stretch reads MPEEAGFPPA…RRSLPIFQAR (80 aa). Positions 39–49 are enriched in gly residues; the sequence is GSGGRGGGGGR. Residues 50-64 are compositionally biased toward low complexity; it reads RQQPPLAQPSASPYP. The Helicase ATP-binding domain maps to 84–252; that stretch reads LAQLRNLDNA…FNGAPVLYLE (169 aa). 97-104 serves as a coordination point for ATP; it reads GETGSGKT. The DEAH box signature appears at 194-197; that stretch reads DEAH. The Helicase C-terminal domain maps to 277 to 450; it reads SVFQIHQEAP…SVMLQLLAMK (174 aa). Positions 471 to 562 are HA2; required for interaction with EIF3G and RPL26; sequence AIAQLDLLGA…ISSEGDHMTL (92 aa). A Critical for rDNA-binding motif is present at residues 547–558; sequence GVRKKFISSEGD.

It belongs to the DEAD box helicase family. DEAH subfamily. Interacts with UBTF. Interacts with DDX3X, EIF3G and EIF3H; the interaction is independent of RNA. Interacts (via HA2 region and Helicase C-terminal domain) with the components of the large ribosomal subunit RPL3, RPL7, RPL26 and RPL27. Interacts (via DEAH box) with NLRP3 (via NACHT domain). Binds to mRNA. Binds to double-stranded RNA (via the helicase C-terminal domain). Interacts (via the helicase C-terminal domain) with MAVS. Post-translationally, ubiquitinated, leading to its degradation by the proteasome. Deubiquitinated by USP36.

Its subcellular location is the nucleus. It is found in the nucleolus. It localises to the nucleoplasm. The protein resides in the cytoplasm. The protein localises to the inflammasome. It catalyses the reaction ATP + H2O = ADP + phosphate + H(+). Implicated in nucleolar organization, ribosome biogenesis, protein synthesis and cytoplasmic dsRNA sensing. Stimulates RNA polymerase I transcription of the 47S precursor rRNA. Associates with ribosomal DNA (rDNA) loci where it is involved in POLR1A recruitment. In the cytoplasm, promotes elongation-competent 80S ribosome assembly at the late stage of mRNA translation initiation. Senses cytosolic dsRNA mediating NLRP3 inflammasome formation in macrophages and type I interferon production in myeloid dendritic cells. Required for NLRP3 activation induced by viral dsRNA and bacterial RNA. In dendritic cells, required for induction of type I interferon production induced by cytoplasmic dsRNA via the activation of MAPK and NF-kappa-B signaling pathways. The sequence is that of ATP-dependent RNA helicase DHX33 from Homo sapiens (Human).